We begin with the raw amino-acid sequence, 377 residues long: Rhodopsin, long-wavelength (377 aa).

Over Met-1–Trp-51 the chain is Extracellular. N-linked (GlcNAc...) asparagine glycosylation occurs at Asn-22. The helical transmembrane segment at His-52–Ile-76 threads the bilayer. Residues Phe-77–Asn-88 are Cytoplasmic-facing. Residues Leu-89–Cys-113 traverse the membrane as a helical segment. Residues Tyr-114–Tyr-128 lie on the Extracellular side of the membrane. A disulfide bond links Cys-125 and Cys-202. Residues Ala-129–Phe-148 traverse the membrane as a helical segment. Topologically, residues Asp-149 to Gly-167 are cytoplasmic. The helical transmembrane segment at Ala-168 to Asn-191 threads the bilayer. The Extracellular segment spans residues Arg-192–Ser-215. Asn-198 is a glycosylation site (N-linked (GlcNAc...) asparagine). The helical transmembrane segment at Tyr-216–Val-243 threads the bilayer. Topologically, residues Ala-244 to Lys-278 are cytoplasmic. Residues Val-279–Ile-302 traverse the membrane as a helical segment. The Extracellular portion of the chain corresponds to Phe-303–Ser-309. A helical transmembrane segment spans residues Pro-310–Ser-334. N6-(retinylidene)lysine is present on Lys-321. Over His-335–Ala-377 the chain is Cytoplasmic. The span at Ser-357 to Thr-370 shows a compositional bias: low complexity. The tract at residues Ser-357–Ala-377 is disordered.

This sequence belongs to the G-protein coupled receptor 1 family. Opsin subfamily. In terms of processing, phosphorylated on some or all of the serine and threonine residues present in the C-terminal region.

The protein localises to the membrane. Functionally, visual pigments are the light-absorbing molecules that mediate vision. They consist of an apoprotein, opsin, covalently linked to 11-cis-retinal. The sequence is that of Rhodopsin, long-wavelength from Apis mellifera (Honeybee).